We begin with the raw amino-acid sequence, 554 residues long: Sesquithujene synthase A (554 aa).

Residues D308 and D312 each coordinate Mg(2+). Substrate is bound by residues D308 and D312. Positions 308–312 (DDMFD) match the DDXXD motif motif. The segment at 407 to 411 (SIGAN) is determine the stereoselectivity of the enzyme. R449 and N452 together coordinate substrate. Mg(2+)-binding residues include N452, S456, and E460.

It belongs to the terpene synthase family. In terms of assembly, monomer. Mg(2+) serves as cofactor. Requires Mn(2+) as cofactor. As to expression, highly expressed in the husk. Detected in leaves.

It localises to the cytoplasm. The enzyme catalyses (2E,6E)-farnesyl diphosphate = sesquithujene + diphosphate. It catalyses the reaction (2Z,6Z)-farnesyl diphosphate = (1S,5S,6S)-alpha-bergamotene + diphosphate. The catalysed reaction is (2E,6E)-farnesyl diphosphate = (E)-beta-farnesene + diphosphate. It carries out the reaction (2E,6E)-farnesyl diphosphate = (S)-beta-bisabolene + diphosphate. The enzyme catalyses (2Z,6E)-farnesyl diphosphate = (-)-beta-curcumene + diphosphate. It catalyses the reaction (2E,6E)-farnesyl diphosphate = gamma-curcumene + diphosphate. The catalysed reaction is (2E,6E)-farnesyl diphosphate = sesquisabinene B + diphosphate. Its pathway is secondary metabolite biosynthesis; terpenoid biosynthesis. Functionally, sesquiterpene synthase involved in the production after herbivore attack of a blend of volatiles that attracts natural enemies of herbivores. Converts farnesyl diphosphate to sesquithujene, (S)-beta-bisabolene, (Z)-alpha-bergamotene, sesquisabinene B and several minor products. Can also act in vitro as a monoterpene synthase, converting geranyl diphosphate to (S)-(-)-limonene, beta-myrcene and 11 other monoterpenes. This chain is Sesquithujene synthase A, found in Zea mays (Maize).